The following is a 96-amino-acid chain: UPF0235 protein Spro_4033 (96 aa).

It belongs to the UPF0235 family.

The sequence is that of UPF0235 protein Spro_4033 from Serratia proteamaculans (strain 568).